The chain runs to 196 residues: Zinc metalloproteinase-disintegrin-like bothrojarin-3 (196 aa).

One can recognise a Disintegrin domain in the interval 2–88 (PPVCGTELLE…DCPTDDIQRN (87 aa)). 5 residues coordinate Ca(2+): Val-4, Leu-9, Glu-11, Glu-14, and Asp-17. Disulfide bonds link Cys-5–Cys-34, Cys-16–Cys-29, Cys-18–Cys-24, Cys-28–Cys-51, Cys-42–Cys-48, Cys-47–Cys-73, Cys-60–Cys-80, Cys-67–Cys-99, Cys-92–Cys-104, Cys-111–Cys-161, Cys-126–Cys-168, Cys-139–Cys-149, and Cys-156–Cys-193. The D/ECD-tripeptide motif lies at 66–68 (ECD).

This sequence belongs to the venom metalloproteinase (M12B) family. P-III subfamily. P-IIIa sub-subfamily. In terms of assembly, monomer. Zn(2+) serves as cofactor. Glycosylated. Expressed by the venom gland.

It localises to the secreted. In terms of biological role, the hemorrhagic metalloproteinase-disintegrin-like bothrojarin-1 is a potent inhibitor of collagen-induced platelet aggregation by blockage of alpha-2/beta-1 (ITGA2/ITGB1) integrin. It does not present any fibrinogen-clotting activity. The polypeptide is Zinc metalloproteinase-disintegrin-like bothrojarin-3 (Bothrops jararaca (Jararaca)).